A 513-amino-acid chain; its full sequence is Cytochrome P450 94A2 (513 aa).

A helical membrane pass occupies residues 7 to 24; sequence ISWLLFSTSLFWFLFLAT. Heme is bound at residue C455.

Belongs to the cytochrome P450 family. Heme is required as a cofactor. In terms of tissue distribution, weakly expressed in seedlings.

The protein localises to the endoplasmic reticulum membrane. Its function is as follows. Catalyzes the omega-hydroxylation of various fatty acids (FA). The substrate specificity is higher for myristate &gt; laurate = palmitate (C14&gt;C16=C12). The polypeptide is Cytochrome P450 94A2 (CYP94A2) (Vicia sativa (Spring vetch)).